The sequence spans 427 residues: mRNA cap guanine-N(7) methyltransferase (427 aa).

Positions 1–79 (MSLNYEQNAA…EPETEAASGA (79 aa)) are disordered. Phosphoserine occurs at positions 22, 24, 29, 46, and 48. Residues 44 to 57 (HVSKSPREYYDEPG) show a composition bias toward basic and acidic residues. The mRNA cap 0 methyltransferase domain maps to 103–411 (SKIFFMRNFN…LYLVCAFKKC (309 aa)). An mRNA-binding site is contributed by 112–113 (NN). S-adenosyl-L-methionine contacts are provided by K116, C143, D165, D202, Q225, and Y230.

This sequence belongs to the class I-like SAM-binding methyltransferase superfamily. mRNA cap 0 methyltransferase family.

It is found in the nucleus. It carries out the reaction a 5'-end (5'-triphosphoguanosine)-ribonucleoside in mRNA + S-adenosyl-L-methionine = a 5'-end (N(7)-methyl 5'-triphosphoguanosine)-ribonucleoside in mRNA + S-adenosyl-L-homocysteine. In terms of biological role, mRNA-capping methyltransferase that methylates the N7 position of the added guanosine to the 5'-cap structure of mRNAs. Binds RNA containing 5'-terminal GpppC. The polypeptide is mRNA cap guanine-N(7) methyltransferase (Drosophila melanogaster (Fruit fly)).